We begin with the raw amino-acid sequence, 207 residues long: FMN-dependent NADH:quinone oxidoreductase (207 aa).

S10 contributes to the FMN binding site.

The protein belongs to the azoreductase type 1 family. As to quaternary structure, homodimer. Requires FMN as cofactor.

The enzyme catalyses 2 a quinone + NADH + H(+) = 2 a 1,4-benzosemiquinone + NAD(+). The catalysed reaction is N,N-dimethyl-1,4-phenylenediamine + anthranilate + 2 NAD(+) = 2-(4-dimethylaminophenyl)diazenylbenzoate + 2 NADH + 2 H(+). In terms of biological role, quinone reductase that provides resistance to thiol-specific stress caused by electrophilic quinones. Functionally, also exhibits azoreductase activity. Catalyzes the reductive cleavage of the azo bond in aromatic azo compounds to the corresponding amines. This Shouchella clausii (strain KSM-K16) (Alkalihalobacillus clausii) protein is FMN-dependent NADH:quinone oxidoreductase.